A 298-amino-acid polypeptide reads, in one-letter code: Urease accessory protein UreD (298 aa).

Belongs to the UreD family. As to quaternary structure, ureD, UreF and UreG form a complex that acts as a GTP-hydrolysis-dependent molecular chaperone, activating the urease apoprotein by helping to assemble the nickel containing metallocenter of UreC. The UreE protein probably delivers the nickel.

The protein localises to the cytoplasm. Required for maturation of urease via the functional incorporation of the urease nickel metallocenter. The chain is Urease accessory protein UreD from Frankia alni (strain DSM 45986 / CECT 9034 / ACN14a).